A 583-amino-acid polypeptide reads, in one-letter code: Hyaluronan synthase-related protein (583 aa).

Topologically, residues 1–29 (MENTTDPENIPVSKPKYPTIRRILSQTFR) are cytoplasmic. A helical membrane pass occupies residues 30-50 (ILLLFSITTAYVLGYQALCHQ). Topologically, residues 51-52 (GL) are extracellular. A helical transmembrane segment spans residues 53–73 (LITFGLYGAAMLLHLLMQGIF). The Cytoplasmic segment spans residues 74 to 393 (ANLEIRRIEK…CNAQWWHQHH (320 aa)). The helical transmembrane segment at 394–414 (IWMTYESATGIFFPFFVTAVL) threads the bilayer. The Extracellular segment spans residues 415–425 (IRLMYSSSLCN). The helical transmembrane segment at 426-446 (IVWLFLCIQIMSLLLSLYASW) threads the bilayer. Residues 447–457 (QSKKLSMVLMS) lie on the Cytoplasmic side of the membrane. A helical transmembrane segment spans residues 458–478 (LYSTLYIIWLLPCQLVALLTI). Over 479-497 (AKSDWGTSGRKKVVNNYVP) the chain is Extracellular. A helical transmembrane segment spans residues 498-518 (LFSLSIWAAVLLGGLCYSMYI). The Cytoplasmic portion of the chain corresponds to 519–535 (GCRKDWSKPQANRELYH). The chain crosses the membrane as a helical span at residues 536 to 556 (LLYGCAGYMAYWVLMTVIYCV). Residues 557–583 (SGSCCKMRSQAVPQTHDITSLSVSLLV) are Extracellular-facing.

Belongs to the NodC/HAS family.

Its subcellular location is the membrane. The chain is Hyaluronan synthase-related protein (has-rs) from Xenopus laevis (African clawed frog).